A 257-amino-acid polypeptide reads, in one-letter code: Tryptophan synthase alpha chain (257 aa).

Catalysis depends on proton acceptor residues Glu51 and Asp62.

The protein belongs to the TrpA family. As to quaternary structure, tetramer of two alpha and two beta chains.

The catalysed reaction is (1S,2R)-1-C-(indol-3-yl)glycerol 3-phosphate + L-serine = D-glyceraldehyde 3-phosphate + L-tryptophan + H2O. It functions in the pathway amino-acid biosynthesis; L-tryptophan biosynthesis; L-tryptophan from chorismate: step 5/5. Functionally, the alpha subunit is responsible for the aldol cleavage of indoleglycerol phosphate to indole and glyceraldehyde 3-phosphate. The polypeptide is Tryptophan synthase alpha chain (Nitratidesulfovibrio vulgaris (strain DP4) (Desulfovibrio vulgaris)).